We begin with the raw amino-acid sequence, 141 residues long: ATP synthase epsilon chain (141 aa).

This sequence belongs to the ATPase epsilon chain family. As to quaternary structure, F-type ATPases have 2 components, CF(1) - the catalytic core - and CF(0) - the membrane proton channel. CF(1) has five subunits: alpha(3), beta(3), gamma(1), delta(1), epsilon(1). CF(0) has three main subunits: a, b and c.

The protein resides in the cell inner membrane. In terms of biological role, produces ATP from ADP in the presence of a proton gradient across the membrane. This Teredinibacter turnerae (strain ATCC 39867 / T7901) protein is ATP synthase epsilon chain.